The sequence spans 512 residues: Hyaluronidase PH-20 (512 aa).

An N-terminal signal peptide occupies residues 1–35; the sequence is MGELRFKHLFWGSFVESGGTFQTVLIFLLIPCSLT. An N-linked (GlcNAc...) asparagine glycan is attached at Asn46. Intrachain disulfides connect Cys60–Cys351 and Cys223–Cys237. Glu147 (proton donor) is an active-site residue. The N-linked (GlcNAc...) asparagine glycan is linked to Asn165. 2 N-linked (GlcNAc...) asparagine glycosylation sites follow: Asn293 and Asn368. Cystine bridges form between Cys376-Cys387, Cys381-Cys435, and Cys437-Cys464.

It belongs to the glycosyl hydrolase 56 family.

The protein localises to the cell membrane. The catalysed reaction is Random hydrolysis of (1-&gt;4)-linkages between N-acetyl-beta-D-glucosamine and D-glucuronate residues in hyaluronate.. Involved in sperm-egg adhesion. Upon fertilization sperm must first penetrate a layer of cumulus cells that surrounds the egg before reaching the zona pellucida. The cumulus cells are embedded in a matrix containing hyaluronic acid which is formed prior to ovulation. This protein aids in penetrating the layer of cumulus cells by digesting hyaluronic acid. The polypeptide is Hyaluronidase PH-20 (Spam1) (Mus musculus (Mouse)).